The primary structure comprises 728 residues: MSTEPKCPFHHTAGSGTSNKDWWPNQINLNILHRHSSLSDPMDKDFNYAEAFKQLDLAAVKRDLHALMTTSQDWWPADFGHYGGLFIRMAWHSAGTYRIADGRGGAGGGQQRFAPLNSWPDNANLDKARRLLWPIKQKYGRNISWADLLILTGNVALESMGFKTFGYAGGRPDTWEPDDVYWGSEKIWLELSGGPNSRYSGNRELENPLAAVQMGLIYVNPEGPDGNPDPVAAARDIRETFARMAMNDEETVALIAGGHTFGKTHGAGPASSVGPEPEAAALEQQGLGWQSTFGTGKGKDAITSGLEVTWTSTPTKWSNDFFKHLFSYEWELTKSPAGAHQWVAKDAEAVIPDAFDPSKKHRPTMLTTDLALRFDPEYEKISRRFYEHPDQFADAFARAWFKLTHRDMGPRSRYLGPDVPAEELLWQDPVPAVDHPLIDEADIAALKAKVLASGLSVSQLVSTAWASASTFRGSDKRGGANGARIRLAPQKDWEVNRPAELAAVLETLEGVRKAFNDAQTGGKRVSLADLIVLAGAAGVEQAAKNAGVAVTVPFAPGRTDASQEQTDVHAMAVLEPVADGFRNYLKRKFKTPAEALLVDKAQLLTLTAPEMTVLVGGMRVLGTNVGDPKHGVFTERPGTLTNDFFVNLLDMRTEWKPASADNDVFEGRDRATGELKWTGTRVDLVFGSHSQLRALAEVYGSADAQQKFVHDFVAAWNKVMNLDRFDLV.

The segment at residues 91–218 (WHSAGTYRIA…LAAVQMGLIY (128 aa)) is a cross-link (tryptophyl-tyrosyl-methioninium (Trp-Tyr) (with M-244)). Histidine 92 acts as the Proton acceptor in catalysis. Residues 218–244 (YVNPEGPDGNPDPVAAARDIRETFARM) constitute a cross-link (tryptophyl-tyrosyl-methioninium (Tyr-Met) (with W-91)). Histidine 259 provides a ligand contact to heme b.

This sequence belongs to the peroxidase family. Peroxidase/catalase subfamily. As to quaternary structure, homodimer or homotetramer. Requires heme b as cofactor. In terms of processing, formation of the three residue Trp-Tyr-Met cross-link is important for the catalase, but not the peroxidase activity of the enzyme.

It carries out the reaction H2O2 + AH2 = A + 2 H2O. The catalysed reaction is 2 H2O2 = O2 + 2 H2O. In terms of biological role, bifunctional enzyme with both catalase and broad-spectrum peroxidase activity. This Burkholderia multivorans (strain ATCC 17616 / 249) protein is Catalase-peroxidase.